The chain runs to 655 residues: ATP-dependent zinc metalloprotease FtsH (655 aa).

Over Met-1–Lys-17 the chain is Cytoplasmic. A helical membrane pass occupies residues Arg-18–Leu-38. Over Arg-39–Leu-124 the chain is Lumenal. The helical transmembrane segment at Pro-125–Ile-145 threads the bilayer. At Asn-146–Asn-655 the chain is on the cytoplasmic side. An ATP-binding site is contributed by Gly-216–Thr-223. His-440 lines the Zn(2+) pocket. Residue Glu-441 is part of the active site. Zn(2+) is bound by residues His-444 and Asp-517.

In the central section; belongs to the AAA ATPase family. This sequence in the C-terminal section; belongs to the peptidase M41 family. In terms of assembly, homohexamer. The cofactor is Zn(2+).

The protein resides in the cellular thylakoid membrane. Its function is as follows. Acts as a processive, ATP-dependent zinc metallopeptidase for both cytoplasmic and membrane proteins. Plays a role in the quality control of integral membrane proteins. The sequence is that of ATP-dependent zinc metalloprotease FtsH from Acaryochloris marina (strain MBIC 11017).